A 413-amino-acid chain; its full sequence is Putative F-box/kelch-repeat protein At4g22430 (413 aa).

The F-box domain maps to 5-54; it reads NNTITDVLEGIVTEILVRLPLRSISRFKSVSQTWKSAIESVYFRRLFVSL. The stretch at 168–210 is one Kelch repeat; the sequence is NMFLNKGEMYMPLYVYSSETGFWIHKEVVCPVRLPNFYDPISL.

This is Putative F-box/kelch-repeat protein At4g22430 from Arabidopsis thaliana (Mouse-ear cress).